The chain runs to 202 residues: Glycerol-3-phosphate acyltransferase (202 aa).

Transmembrane regions (helical) follow at residues 3 to 23, 61 to 81, 87 to 107, 117 to 137, 144 to 164, and 167 to 187; these read NLIIYAFIYLLGSISFGLILT, IATIILDFAKAAIPLLILKFL, LLWSVAVLAIFGHCFSIYLLF, AGAMIVLLPLEVLTAFIVWAV, ISSLASLAALLAFIVSSFIFN, and LEIHTHAPVFIIAFIIVYKHL.

Belongs to the PlsY family. In terms of assembly, probably interacts with PlsX.

It is found in the cell inner membrane. It carries out the reaction an acyl phosphate + sn-glycerol 3-phosphate = a 1-acyl-sn-glycero-3-phosphate + phosphate. It functions in the pathway lipid metabolism; phospholipid metabolism. Catalyzes the transfer of an acyl group from acyl-phosphate (acyl-PO(4)) to glycerol-3-phosphate (G3P) to form lysophosphatidic acid (LPA). This enzyme utilizes acyl-phosphate as fatty acyl donor, but not acyl-CoA or acyl-ACP. The polypeptide is Glycerol-3-phosphate acyltransferase (Campylobacter jejuni subsp. doylei (strain ATCC BAA-1458 / RM4099 / 269.97)).